The primary structure comprises 413 residues: Glucose-1-phosphate adenylyltransferase (413 aa).

Residues glycine 169, 184–185, and serine 201 each bind alpha-D-glucose 1-phosphate; that span reads EK.

This sequence belongs to the bacterial/plant glucose-1-phosphate adenylyltransferase family. As to quaternary structure, homotetramer.

It carries out the reaction alpha-D-glucose 1-phosphate + ATP + H(+) = ADP-alpha-D-glucose + diphosphate. It functions in the pathway glycan biosynthesis; glycogen biosynthesis. Involved in the biosynthesis of ADP-glucose, a building block required for the elongation reactions to produce glycogen. Catalyzes the reaction between ATP and alpha-D-glucose 1-phosphate (G1P) to produce pyrophosphate and ADP-Glc. The polypeptide is Glucose-1-phosphate adenylyltransferase (Trichlorobacter lovleyi (strain ATCC BAA-1151 / DSM 17278 / SZ) (Geobacter lovleyi)).